A 224-amino-acid chain; its full sequence is MITKEDIVADVVTDYPKSADIFRNAGIDFCCGGQESIASAVNHKPNIDLNSLLNKLNHIDNTEGNSTINPKFLNVESLIQYIQSAYHETLKEEFKNLTPYMTKLAKVHGPSHPYLLKLQDLYREFRDSMLDHIRKEDEEDFPKLIQYSQGQDVQNIKIILEDLINDHEDTGQLLNVMNQLTSDYQTPEEACGTWKLVYQRLQNIERQTHQHVHLENHVLFKKVS.

Belongs to the RIC family. ScdA subfamily. Homodimer.

Its subcellular location is the cytoplasm. Di-iron-containing protein involved in the repair of iron-sulfur clusters damaged by oxidative and nitrosative stress conditions. This is Iron-sulfur cluster repair protein ScdA from Staphylococcus epidermidis (strain ATCC 35984 / DSM 28319 / BCRC 17069 / CCUG 31568 / BM 3577 / RP62A).